Here is a 163-residue protein sequence, read N- to C-terminus: 2-amino-4-hydroxy-6-hydroxymethyldihydropteridine pyrophosphokinase (163 aa).

It belongs to the HPPK family.

The enzyme catalyses 6-hydroxymethyl-7,8-dihydropterin + ATP = (7,8-dihydropterin-6-yl)methyl diphosphate + AMP + H(+). Its pathway is cofactor biosynthesis; tetrahydrofolate biosynthesis; 2-amino-4-hydroxy-6-hydroxymethyl-7,8-dihydropteridine diphosphate from 7,8-dihydroneopterin triphosphate: step 4/4. In terms of biological role, catalyzes the transfer of pyrophosphate from adenosine triphosphate (ATP) to 6-hydroxymethyl-7,8-dihydropterin, an enzymatic step in folate biosynthesis pathway. This is 2-amino-4-hydroxy-6-hydroxymethyldihydropteridine pyrophosphokinase (folK) from Helicobacter pylori (strain ATCC 700392 / 26695) (Campylobacter pylori).